The sequence spans 507 residues: MTLWLPTTGKVYLPPTPPVARVQSTDEYVERTNIFYHAMSDRLLTVGHPFYDVRSTDGLRIEVPKVSGNQYRAFRVTLPDPNKFALADMSVYNPEKERLVWACAGLEIGRGQPLGVGTTGHPLFNKLRDTENNSSYQGGSTDDRQNTSFDPKQVQMFVVGCVPCIGEHWDRAPVCENEQNNQTGLCPPLELKNTVIEDGDMVDIGFGNINNKVLSFNKSDVSLDIVNETCKYPDFLSMANDVYGDACFFFARREQCYARHYFVRGGNVGDAVPDGSVNQDHKFYLPAQTGQQQRTLGNSTYFPTVSGSLVTSDAQLFNRPFWLRRAQGHNNGILWGNQIFVTVADNTRNTNFSISVSTEAGAVTEYNSQNIREYLRHVEEYQLSFILQLCKIPLKAEVLTQINAMNSGILEDWQLGFVPTPDNPVHDIYRYINSKATKCPDAVVEKEKEDPFAKYTFWNVNLTEKLSLDLDQYPLGRKFIFQSGLQARPRTIRTSVKVPKGIKRKRS.

The segment at 120–147 is disordered; the sequence is GHPLFNKLRDTENNSSYQGGSTDDRQNT. Over residues 132–147 the composition is skewed to polar residues; the sequence is NNSSYQGGSTDDRQNT.

The protein belongs to the papillomaviridae L1 protein family. Self-assembles into homopentamers. The capsid has an icosahedral symmetry and consists of 72 capsomers, with each capsomer being a pentamer of L1. Interacts with the minor capsid protein L2; this interaction is necessary for viral genome encapsidation. Interacts with protein E2; this interaction enhances E2-dependent replication and transcription activation.

It is found in the virion. It localises to the host nucleus. Functionally, forms an icosahedral capsid with a T=7 symmetry and a 50 nm diameter. The capsid is composed of 72 pentamers linked to each other by disulfide bonds and associated with L2 proteins. Binds to heparan sulfate proteoglycans on cell surface of basal layer keratinocytes to provide initial virion attachment. This binding mediates a conformational change in the virus capsid that facilitates efficient infection. The virion enters the host cell via endocytosis. During virus trafficking, L1 protein dissociates from the viral DNA and the genomic DNA is released to the host nucleus. The virion assembly takes place within the cell nucleus. Encapsulates the genomic DNA together with protein L2. The sequence is that of Major capsid protein L1 from Homo sapiens (Human).